We begin with the raw amino-acid sequence, 120 residues long: Ribonuclease P protein component (120 aa).

This sequence belongs to the RnpA family. As to quaternary structure, consists of a catalytic RNA component (M1 or rnpB) and a protein subunit.

The enzyme catalyses Endonucleolytic cleavage of RNA, removing 5'-extranucleotides from tRNA precursor.. Functionally, RNaseP catalyzes the removal of the 5'-leader sequence from pre-tRNA to produce the mature 5'-terminus. It can also cleave other RNA substrates such as 4.5S RNA. The protein component plays an auxiliary but essential role in vivo by binding to the 5'-leader sequence and broadening the substrate specificity of the ribozyme. The sequence is that of Ribonuclease P protein component from Chelativorans sp. (strain BNC1).